The sequence spans 382 residues: Type IV pilus ATPase PilU (382 aa).

ATP is bound at residue 133-138 (GTGKST).

This sequence belongs to the GSP E family. Homohexamer. Interacts with PilT.

The protein localises to the cytoplasm. Its function is as follows. ATPase component of the type IV pilus (T4P) that plays a role in surface and host cell adhesion, colonization, biofilm maturation, virulence, and twitching, a form of surface-associated motility facilitated by cycles of extension, adhesion, and retraction of T4P fibers. Functions as a PilT-dependent retraction ATPase, providing a functional coupling between PilT and PilU and an optimal mechanism for pilus retraction. The polypeptide is Type IV pilus ATPase PilU (pilU) (Pseudomonas aeruginosa (strain ATCC 15692 / DSM 22644 / CIP 104116 / JCM 14847 / LMG 12228 / 1C / PRS 101 / PAO1)).